The following is a 334-amino-acid chain: HTH-type transcriptional repressor PurR (334 aa).

Residues 2-56 enclose the HTH lacI-type domain; the sequence is ATIKDVARLAGVSTTTVSHVINKTRFVAEATQEKVMKAVDELNYAPSAVARSLKC. Positions 4-23 form a DNA-binding region, H-T-H motif; the sequence is IKDVARLAGVSTTTVSHVIN. A DNA-binding region spans residues 48 to 56; it reads SAVARSLKC. Hypoxanthine-binding residues include phenylalanine 73, lysine 189, phenylalanine 220, and aspartate 274.

As to quaternary structure, homodimer.

Its pathway is purine metabolism; purine nucleotide biosynthesis [regulation]. Functionally, is the main repressor of the genes involved in the de novo synthesis of purine nucleotides, regulating purB, purC, purEK, purF, purHD, purL, purMN and guaBA expression. PurR is allosterically activated to bind its cognate DNA by binding the purine corepressors, hypoxanthine or guanine, thereby effecting transcription repression. The polypeptide is HTH-type transcriptional repressor PurR (Vibrio vulnificus (strain CMCP6)).